The primary structure comprises 306 residues: Glutaminase (306 aa).

Substrate is bound by residues serine 66, asparagine 116, glutamate 159, asparagine 166, tyrosine 190, tyrosine 242, and valine 260.

The protein belongs to the glutaminase family. As to quaternary structure, homotetramer.

It catalyses the reaction L-glutamine + H2O = L-glutamate + NH4(+). The protein is Glutaminase of Caulobacter vibrioides (strain ATCC 19089 / CIP 103742 / CB 15) (Caulobacter crescentus).